A 654-amino-acid chain; its full sequence is Fructose-1,6-bisphosphatase class 3 (654 aa).

The segment at asparagine 288–glutamate 307 is disordered. Positions aspartate 298 to glutamate 307 are enriched in basic and acidic residues.

It belongs to the FBPase class 3 family. It depends on Mn(2+) as a cofactor.

The catalysed reaction is beta-D-fructose 1,6-bisphosphate + H2O = beta-D-fructose 6-phosphate + phosphate. It participates in carbohydrate biosynthesis; gluconeogenesis. This Staphylococcus aureus (strain bovine RF122 / ET3-1) protein is Fructose-1,6-bisphosphatase class 3.